The primary structure comprises 427 residues: Serine hydroxymethyltransferase (427 aa).

122–124 (GHI) provides a ligand contact to (6S)-5,6,7,8-tetrahydrofolate. K228 is modified (N6-(pyridoxal phosphate)lysine).

Belongs to the SHMT family. Homodimer. It depends on pyridoxal 5'-phosphate as a cofactor.

It localises to the cytoplasm. It participates in amino-acid biosynthesis; glycine biosynthesis; glycine from L-serine: step 1/1. Functionally, catalyzes the reversible interconversion of serine and glycine with a modified folate serving as the one-carbon carrier. Also exhibits a pteridine-independent aldolase activity toward beta-hydroxyamino acids, producing glycine and aldehydes, via a retro-aldol mechanism. This Thermococcus onnurineus (strain NA1) protein is Serine hydroxymethyltransferase.